Reading from the N-terminus, the 216-residue chain is Probable RNA 2'-phosphotransferase 2 (216 aa).

Belongs to the KptA/TPT1 family.

In terms of biological role, removes the 2'-phosphate from RNA via an intermediate in which the phosphate is ADP-ribosylated by NAD followed by a presumed transesterification to release the RNA and generate ADP-ribose 1''-2''-cyclic phosphate (APPR&gt;P). May function as an ADP-ribosylase. The chain is Probable RNA 2'-phosphotransferase 2 (kptA2) from Archaeoglobus fulgidus (strain ATCC 49558 / DSM 4304 / JCM 9628 / NBRC 100126 / VC-16).